A 144-amino-acid chain; its full sequence is Large ribosomal subunit protein uL13 (144 aa).

Belongs to the universal ribosomal protein uL13 family. In terms of assembly, part of the 50S ribosomal subunit.

Functionally, this protein is one of the early assembly proteins of the 50S ribosomal subunit, although it is not seen to bind rRNA by itself. It is important during the early stages of 50S assembly. In Legionella pneumophila (strain Paris), this protein is Large ribosomal subunit protein uL13.